Here is a 267-residue protein sequence, read N- to C-terminus: D-aminoacyl-tRNA deacylase (267 aa).

Belongs to the DtdA deacylase family. As to quaternary structure, monomer. It depends on Zn(2+) as a cofactor.

The catalysed reaction is a D-aminoacyl-tRNA + H2O = a tRNA + a D-alpha-amino acid + H(+). It carries out the reaction glycyl-tRNA(Ala) + H2O = tRNA(Ala) + glycine + H(+). Its function is as follows. D-aminoacyl-tRNA deacylase with broad substrate specificity. By recycling D-aminoacyl-tRNA to D-amino acids and free tRNA molecules, this enzyme counteracts the toxicity associated with the formation of D-aminoacyl-tRNA entities in vivo. The chain is D-aminoacyl-tRNA deacylase from Methanothrix thermoacetophila (strain DSM 6194 / JCM 14653 / NBRC 101360 / PT) (Methanosaeta thermophila).